The primary structure comprises 201 residues: Large ribosomal subunit protein bL25 (201 aa).

The protein belongs to the bacterial ribosomal protein bL25 family. CTC subfamily. Part of the 50S ribosomal subunit; part of the 5S rRNA/L5/L18/L25 subcomplex. Contacts the 5S rRNA. Binds to the 5S rRNA independently of L5 and L18.

This is one of the proteins that binds to the 5S RNA in the ribosome where it forms part of the central protuberance. This Ectopseudomonas mendocina (strain ymp) (Pseudomonas mendocina) protein is Large ribosomal subunit protein bL25.